A 227-amino-acid polypeptide reads, in one-letter code: Cytidylate kinase (227 aa).

Residue Gly-12–Thr-20 coordinates ATP.

It belongs to the cytidylate kinase family. Type 1 subfamily.

It is found in the cytoplasm. The enzyme catalyses CMP + ATP = CDP + ADP. It carries out the reaction dCMP + ATP = dCDP + ADP. The chain is Cytidylate kinase from Marinomonas sp. (strain MWYL1).